A 241-amino-acid polypeptide reads, in one-letter code: Probable transcriptional regulatory protein Daro_4067 (241 aa).

The tract at residues 1–22 (MAGHSKWANIQHRKGRQDEKRG) is disordered.

This sequence belongs to the TACO1 family.

Its subcellular location is the cytoplasm. In Dechloromonas aromatica (strain RCB), this protein is Probable transcriptional regulatory protein Daro_4067.